The primary structure comprises 373 residues: MWAAGRWGPTFPSSYAGFSADCRPRSRPSSDSCSVPMTGARGQGLEVVRSPSPPLPLSCSNSTRSLLSPLGHQSFQFDEDDGDGEDEEDVDDEEDVDEDAHDSEAKVASLRGMELQGCASTQVESENNQEEQKQVRLPESRLTPWEVWFIGKEKEERDRLQLKALEELNQQLEKRKEMEEREKRKIIAEEKHKEWVQKKNEQKRKEREQKINKEMEEKAAKELEKEYLQEKAKEKYQEWLKKKNAEECERKKKEKEKEKQQQAEIQEKKEIAEKKFQEWLENAKHKPRPAAKSYGYANGKLTGFYSGNSYPEPAFYNPIPWKPIHMPPPKEAKDLSGRKSKRPVISQPHKSSSLVIHKARSNLCLGTLCRIQR.

Disordered regions lie at residues 1-112 and 118-137; these read MWAA…SLRG and CASTQVESENNQEEQKQVRL. Residue serine 52 is modified to Phosphoserine. Residues 61-76 are compositionally biased toward polar residues; that stretch reads NSTRSLLSPLGHQSFQ. The segment covering 77 to 101 has biased composition (acidic residues); sequence FDEDDGDGEDEEDVDDEEDVDEDAH. Residues 152-286 are a coiled coil; that stretch reads KEKEERDRLQ…QEWLENAKHK (135 aa). Residues 324–352 form a disordered region; sequence IHMPPPKEAKDLSGRKSKRPVISQPHKSS. Positions 328–337 are enriched in basic and acidic residues; the sequence is PPKEAKDLSG.

In terms of tissue distribution, expressed in sperm.

It localises to the cell projection. The protein localises to the cilium. The protein resides in the flagellum. Functionally, involved in spermatogenesis. Has a probable role in anterograde intraflagellar transport which is essential for the formation of sperm flagella. The polypeptide is Coiled-coil domain-containing protein 34 (CCDC34) (Homo sapiens (Human)).